A 471-amino-acid polypeptide reads, in one-letter code: Trigger factor (471 aa).

The region spanning 169 to 264 (GDVAVVDFKG…LKEIKEKELP (96 aa)) is the PPIase FKBP-type domain. The segment at 443–471 (SLASQESEITAPETEAETIEVTAESTTGE) is disordered. The span at 448–471 (ESEITAPETEAETIEVTAESTTGE) shows a compositional bias: low complexity.

Belongs to the FKBP-type PPIase family. Tig subfamily.

The protein localises to the cytoplasm. The catalysed reaction is [protein]-peptidylproline (omega=180) = [protein]-peptidylproline (omega=0). Its function is as follows. Involved in protein export. Acts as a chaperone by maintaining the newly synthesized protein in an open conformation. Functions as a peptidyl-prolyl cis-trans isomerase. In Trichormus variabilis (strain ATCC 29413 / PCC 7937) (Anabaena variabilis), this protein is Trigger factor.